Reading from the N-terminus, the 492-residue chain is Nuclear hormone receptor family member nhr-4 (492 aa).

A DNA-binding region (nuclear receptor) is located at residues 47–122 (RLICDVCGDV…VGMNPDSVQN (76 aa)). 2 NR C4-type zinc fingers span residues 50–70 (CDVCGDVAFGKHYGINACNGC) and 86–110 (CRFGGDCPVVKEHRNVCRSCRLKKC). Residues 121-143 (QNERDRNAKNGGMGGPMSSPTQS) form a disordered region. An NR LBD domain is found at 215 to 481 (MDFSIHSAVL…ELIQATHKTT (267 aa)).

Belongs to the nuclear hormone receptor family.

The protein localises to the nucleus. In terms of biological role, orphan nuclear receptor. The chain is Nuclear hormone receptor family member nhr-4 (nhr-4) from Caenorhabditis elegans.